The sequence spans 153 residues: Transcriptional repressor NrdR (153 aa).

A disordered region spans residues 1-20; sequence MKCPFCNSADTRVKNSRHSD. The segment at 3 to 34 is a zinc-finger region; that stretch reads CPFCNSADTRVKNSRHSDDNMSVRRRRLCEVC. The span at 11 to 20 shows a compositional bias: basic and acidic residues; the sequence is TRVKNSRHSD. Positions 49 to 139 constitute an ATP-cone domain; the sequence is IMVLKKDGRM…VYMDFSDADD (91 aa).

The protein belongs to the NrdR family. The cofactor is Zn(2+).

Functionally, negatively regulates transcription of bacterial ribonucleotide reductase nrd genes and operons by binding to NrdR-boxes. The polypeptide is Transcriptional repressor NrdR (Anaplasma phagocytophilum (strain HZ)).